The following is a 661-amino-acid chain: Probable urea active transporter 3 (661 aa).

15 helical membrane passes run 13-33 (GIVI…TYVL), 56-76 (GLIS…LTSA), 86-106 (GSMW…VIAL), 132-152 (AVFL…LLLG), 165-185 (VVAA…SGGL), 197-217 (VIVY…SVHI), 251-271 (AVFV…CDPS), 288-308 (YFAG…AAAL), 352-372 (AGVL…LVAF), 397-417 (VTHV…VLFN), 419-439 (IGIT…PAVF), 454-474 (GMII…VGSC), 495-515 (VGNF…SYFF), 556-576 (IGIF…PLPM), and 591-611 (WIIV…FYPL).

Belongs to the sodium:solute symporter (SSF) (TC 2.A.21) family.

The protein resides in the membrane. It localises to the golgi apparatus membrane. In terms of biological role, involved in active transport of urea. This chain is Probable urea active transporter 3 (dur3-3), found in Schizosaccharomyces pombe (strain 972 / ATCC 24843) (Fission yeast).